Reading from the N-terminus, the 136-residue chain is Large ribosomal subunit protein uL16c (136 aa).

It belongs to the universal ribosomal protein uL16 family. As to quaternary structure, part of the 50S ribosomal subunit.

Its subcellular location is the plastid. It is found in the chloroplast. In Phaseolus angularis (Azuki bean), this protein is Large ribosomal subunit protein uL16c.